The following is a 30-amino-acid chain: Trypsin inhibitor 3 (30 aa).

Intrachain disulfides connect C4/C21, C11/C23, and C17/C29.

This sequence belongs to the protease inhibitor I7 (squash-type serine protease inhibitor) family.

It is found in the secreted. In terms of biological role, inhibits lysyl endopeptidase and trypsin. This chain is Trypsin inhibitor 3, found in Cucumis melo var. conomon (Oriental pickling melon).